We begin with the raw amino-acid sequence, 183 residues long: DELTA-miturgitoxin-Cp1c (183 aa).

The first 20 residues, 1–20 (MKFSLFFSVFFLAVLHACLS), serve as a signal peptide directing secretion. Residues 21 to 47 (ESEIDLEDEEHFMSSDSFLSEIQDESR) constitute a propeptide that is removed on maturation. The short motif at 44 to 47 (DESR) is the Processing quadruplet motif element. 8 disulfides stabilise this stretch: Cys-51–Cys-66, Cys-58–Cys-75, Cys-65–Cys-88, Cys-77–Cys-86, Cys-115–Cys-130, Cys-122–Cys-139, Cys-129–Cys-157, and Cys-141–Cys-155. Residues 164–177 (QAIEGALRIAKKLI) form a predicted alpha-helix region. The residue at position 181 (Trp-181) is a Tryptophan amide.

The protein belongs to the neurotoxin 19 (CSTX) family. Double-CSTX subfamily. In terms of processing, cleavage of the propeptide depends on the processing quadruplet motif (XXXR, with at least one of X being E). Expressed by the venom gland.

It localises to the secreted. Its subcellular location is the target cell membrane. Functionally, spider venom toxin that exhibits cytolytic activity by forming an alpha-helix across the membrane. Lethal to insect larvae. Causes instant paralysis and death in the larvae of the flesh fly (S.carnaria) at doses of 20 ug/g, at doses of less than 10 ug/g causes reversible paralysis. Has cytolytic activity against insect Sf9 cells. Causes stable and irreversible depolarization of fly muscle fibers, leading to contracture at higher toxin concentrations. Destabilizes membranes. The protein is DELTA-miturgitoxin-Cp1c of Cheiracanthium punctorium (Yellow sac spider).